A 323-amino-acid chain; its full sequence is Cell division protein ZipA (323 aa).

Residues 1–5 (MQELR) are Periplasmic-facing. A helical transmembrane segment spans residues 6 to 26 (FVLIVVGALAIAALLFHGLWT). Residues 27 to 323 (SKKEGKAKFG…QIVEFNAANA (297 aa)) are Cytoplasmic-facing. Positions 35 to 92 (FGNKPLGKLDVDQEDKDTPGQERDFAPDPEDDFEIIRKDRKEPDFGMENSFDNKFSSD) are disordered. 2 stretches are compositionally biased toward basic and acidic residues: residues 41-60 (GKLD…RDFA) and 68-78 (EIIRKDRKEPD).

The protein belongs to the ZipA family. Interacts with FtsZ via their C-terminal domains.

It is found in the cell inner membrane. Essential cell division protein that stabilizes the FtsZ protofilaments by cross-linking them and that serves as a cytoplasmic membrane anchor for the Z ring. Also required for the recruitment to the septal ring of downstream cell division proteins. This Vibrio campbellii (strain ATCC BAA-1116) protein is Cell division protein ZipA.